Reading from the N-terminus, the 255-residue chain is MWIGIISLFPEMFRAITDYGVTGRAVKNGLLSIQSWSPRDFTYDRHRTVDDRPYGGGPGMLMMVQPLRDAIHAAKAAAGEGAKVIYLSPQGRKLDQAGVSELATNQKLILVCGRYEGIDERVIQTEIDEEWSIGDYVLSGGELPAMTLIDSVSRFIPGVLGHEASATEDSFAEGLLDCPHYTRPEVLEGMEVPPVLLSGNHAEIRRWRLKQSLGRTWLRRPELLENLALTEEQARLLAEFKTEHAQQQHKHDGMA.

Residues Gly-113 and 133-138 each bind S-adenosyl-L-methionine; that span reads IGDYVL.

This sequence belongs to the RNA methyltransferase TrmD family. Homodimer.

Its subcellular location is the cytoplasm. It carries out the reaction guanosine(37) in tRNA + S-adenosyl-L-methionine = N(1)-methylguanosine(37) in tRNA + S-adenosyl-L-homocysteine + H(+). Specifically methylates guanosine-37 in various tRNAs. The polypeptide is tRNA (guanine-N(1)-)-methyltransferase (Escherichia coli O127:H6 (strain E2348/69 / EPEC)).